We begin with the raw amino-acid sequence, 660 residues long: Methionine--tRNA ligase (660 aa).

The 'HIGH' region motif lies at 15–25; that stretch reads YYPSDKLHIGH. Positions 311–315 match the 'KMSKS' region motif; sequence KMSKS. Position 314 (lysine 314) interacts with ATP. Residues 535–554 are disordered; it reads LMGGSKKPEEAPKDEKEESD. Basic and acidic residues predominate over residues 540–550; sequence KKPEEAPKDEK. A tRNA-binding domain is found at 560 to 660; it reads DFSKVELRIA…GALPNGSLVK (101 aa).

It belongs to the class-I aminoacyl-tRNA synthetase family. MetG type 2B subfamily. In terms of assembly, homodimer.

Its subcellular location is the cytoplasm. It catalyses the reaction tRNA(Met) + L-methionine + ATP = L-methionyl-tRNA(Met) + AMP + diphosphate. Functionally, is required not only for elongation of protein synthesis but also for the initiation of all mRNA translation through initiator tRNA(fMet) aminoacylation. The sequence is that of Methionine--tRNA ligase (metG) from Halalkalibacterium halodurans (strain ATCC BAA-125 / DSM 18197 / FERM 7344 / JCM 9153 / C-125) (Bacillus halodurans).